Here is a 131-residue protein sequence, read N- to C-terminus: Holin-like protein CidA (131 aa).

4 helical membrane-spanning segments follow: residues 4–24, 30–50, 65–85, and 88–108; these read VQLI…TYIG, IFHL…LLLQ, FLLK…MDVA, and ITLN…IVAL.

The protein belongs to the CidA/LrgA family. CidA subfamily.

It localises to the cell membrane. Increases the activity of extracellular murein hydrolases possibly by mediating their export via hole formation. Inhibited by the antiholin-like proteins LrgAB. In an unstressed cell, the LrgAB products probably inhibit the function of the CidAB proteins. When a cell is stressed by the addition of antibiotics or by other factors in the environment, the CidAB proteins possibly oligomerize within the bacterial cell membrane, creating lesions that disrupt the proton motive force, which in turn results in loss of cell viability. These lesions are also hypothesized to regulate the subsequent cell lysis by either allowing the murein hydrolases access to the cell wall substrate and/or regulating their activity by a possible change in the cell wall pH that results from loss of membrane potential. This chain is Holin-like protein CidA, found in Staphylococcus aureus (strain Mu3 / ATCC 700698).